Here is a 270-residue protein sequence, read N- to C-terminus: Tryptophan synthase alpha chain (270 aa).

Residues E49 and D60 each act as proton acceptor in the active site.

It belongs to the TrpA family. In terms of assembly, tetramer of two alpha and two beta chains.

The enzyme catalyses (1S,2R)-1-C-(indol-3-yl)glycerol 3-phosphate + L-serine = D-glyceraldehyde 3-phosphate + L-tryptophan + H2O. Its pathway is amino-acid biosynthesis; L-tryptophan biosynthesis; L-tryptophan from chorismate: step 5/5. Its function is as follows. The alpha subunit is responsible for the aldol cleavage of indoleglycerol phosphate to indole and glyceraldehyde 3-phosphate. The polypeptide is Tryptophan synthase alpha chain (Marinobacter nauticus (strain ATCC 700491 / DSM 11845 / VT8) (Marinobacter aquaeolei)).